A 230-amino-acid chain; its full sequence is Ureidoacrylate amidohydrolase RutB (230 aa).

Asp-24 (proton acceptor) is an active-site residue. Residue Lys-133 is part of the active site. Cys-166 (nucleophile) is an active-site residue.

It belongs to the isochorismatase family. RutB subfamily.

It catalyses the reaction (Z)-3-ureidoacrylate + H2O + H(+) = (Z)-3-aminoacrylate + NH4(+) + CO2. The enzyme catalyses (Z)-3-ureidoacrylate + H2O = (Z)-3-aminoacrylate + carbamate + H(+). It carries out the reaction (Z)-2-methylureidoacrylate + H2O + H(+) = (Z)-2-methylaminoacrylate + NH4(+) + CO2. Functionally, hydrolyzes ureidoacrylate to form aminoacrylate and carbamate. The carbamate hydrolyzes spontaneously, thereby releasing one of the nitrogen atoms of the pyrimidine ring as ammonia and one of its carbon atoms as CO2. The chain is Ureidoacrylate amidohydrolase RutB from Enterobacter sp. (strain 638).